A 906-amino-acid polypeptide reads, in one-letter code: Formin-like protein 16 (906 aa).

Residues 1-28 (MAPAPSPTPLPLFLLLLLLVGVAPLAAA) form the signal peptide. Residues 34–76 (QTRFPSTRTPAFATPPPITSPSPSPGTPTATPSSSPPSSSGKR) are disordered. The segment covering 46 to 59 (ATPPPITSPSPSPG) has biased composition (pro residues). A compositionally biased stretch (low complexity) spans 60–73 (TPTATPSSSPPSSS). A helical membrane pass occupies residues 81 to 101 (VAVVSTALSSFAVSGLAFFLF). Disordered regions lie at residues 113 to 149 (AGGAGQHYGGAQGGALTGKRPEREPKRPARGNMVDEN), 161 to 223 (KEGD…SLDS), 250 to 404 (AYAR…DQQA), 451 to 474 (RKTKPADSKDASGGSTSAGLGRSN), 677 to 702 (GSLAKSTDGGNPAASSTSQGPSREER), and 834 to 906 (LQQQ…SDEE). Over residues 114 to 128 (GGAGQHYGGAQGGAL) the composition is skewed to gly residues. The segment covering 174 to 185 (SRRPPQPPPPRP) has biased composition (pro residues). Positions 186–196 (YRAERRQDAHE) are enriched in basic and acidic residues. Residues 270 to 294 (SPSPAPAPAARPASPSPSLPLPPGR) are compositionally biased toward pro residues. Residues 295–310 (ESPSRPQSIAAAAVAS) are compositionally biased toward low complexity. Positions 311–383 (PAPPPPPPPK…KGGPPPPPPK (73 aa)) are enriched in pro residues. In terms of domain architecture, FH2 spans 396-849 (PTGSADQQAK…PTPPPSSSQP (454 aa)). Polar residues-rich tracts occupy residues 463–474 (GGSTSAGLGRSN) and 677–697 (GSLAKSTDGGNPAASSTSQGP). A compositionally biased stretch (low complexity) spans 847-866 (SQPAAPAATTKGAADDAPAP).

It belongs to the formin-like family. Class-I subfamily.

It localises to the membrane. This is Formin-like protein 16 (FH16) from Oryza sativa subsp. japonica (Rice).